We begin with the raw amino-acid sequence, 220 residues long: MDDFRKYATKHLGMNAMVLDDVIKSQAGYLNPYILEERQLNVTQLDVFSRLMMDRIIFLGTQIDDYTANTLQAQLLYLDSVDPGKDISIYINSPGGSVYAGLGIYDTMQFISSDVATICTGMAASMASVLLVAGAKGKRSALPHSRVMIHQPMGGAQGQASDIEITAREIQKLKKELYTIIADHSGTSFDKVWADSDRDYWMTAQEAKEYGMIDEVLIKK.

Ser125 serves as the catalytic Nucleophile. His150 is an active-site residue.

This sequence belongs to the peptidase S14 family. Fourteen ClpP subunits assemble into 2 heptameric rings which stack back to back to give a disk-like structure with a central cavity, resembling the structure of eukaryotic proteasomes.

Its subcellular location is the cytoplasm. The enzyme catalyses Hydrolysis of proteins to small peptides in the presence of ATP and magnesium. alpha-casein is the usual test substrate. In the absence of ATP, only oligopeptides shorter than five residues are hydrolyzed (such as succinyl-Leu-Tyr-|-NHMec, and Leu-Tyr-Leu-|-Tyr-Trp, in which cleavage of the -Tyr-|-Leu- and -Tyr-|-Trp bonds also occurs).. In terms of biological role, cleaves peptides in various proteins in a process that requires ATP hydrolysis. Has a chymotrypsin-like activity. Plays a major role in the degradation of misfolded proteins. This is ATP-dependent Clp protease proteolytic subunit from Bacteroides fragilis (strain YCH46).